The primary structure comprises 480 residues: Acetyl-coenzyme A carboxylase carboxyl transferase subunit beta, chloroplastic (480 aa).

The tract at residues 25–48 is disordered; that stretch reads TSSLGPIENASESKDPNINDTDKN. Residues 35–47 show a composition bias toward basic and acidic residues; the sequence is SESKDPNINDTDK. The CoA carboxyltransferase N-terminal domain occupies 216-480; that stretch reads LWVQCENCYG…LHTFFPLNQN (265 aa). 4 residues coordinate Zn(2+): cysteine 220, cysteine 223, cysteine 239, and cysteine 242. A C4-type zinc finger spans residues 220–242; the sequence is CENCYGLNYKKFFKSKMNLCEQC.

This sequence belongs to the AccD/PCCB family. As to quaternary structure, acetyl-CoA carboxylase is a heterohexamer composed of biotin carboxyl carrier protein, biotin carboxylase and 2 subunits each of ACCase subunit alpha and ACCase plastid-coded subunit beta (accD). Zn(2+) is required as a cofactor.

It is found in the plastid. The protein localises to the chloroplast stroma. The enzyme catalyses N(6)-carboxybiotinyl-L-lysyl-[protein] + acetyl-CoA = N(6)-biotinyl-L-lysyl-[protein] + malonyl-CoA. Its pathway is lipid metabolism; malonyl-CoA biosynthesis; malonyl-CoA from acetyl-CoA: step 1/1. Component of the acetyl coenzyme A carboxylase (ACC) complex. Biotin carboxylase (BC) catalyzes the carboxylation of biotin on its carrier protein (BCCP) and then the CO(2) group is transferred by the transcarboxylase to acetyl-CoA to form malonyl-CoA. This chain is Acetyl-coenzyme A carboxylase carboxyl transferase subunit beta, chloroplastic, found in Helianthus annuus (Common sunflower).